The chain runs to 140 residues: Natriuretic peptides B (140 aa).

The signal sequence occupies residues 1-26; sequence MEPCAALPRALLLLLFLHLSPLGGRP. Residues 71 to 94 form a disordered region; it reads LEPLHRSHSPAEAPEAGGTPRGVL. Cys118 and Cys134 are disulfide-bonded.

This sequence belongs to the natriuretic peptide family. In terms of processing, the precursor molecule is proteolytically cleaved by the endoproteases FURIN or CORIN at Arg-108 to produce the brain natriuretic peptide 32. CORIN also cleaves the precursor molecule at additional residues including Arg-105, Arg-108 and possibly Lys-111. Post-translationally, undergoes further proteolytic cleavage by various proteases such as DPP4, MME and possibly FAP, to give rise to a variety of shorter peptides. Cleaved at Pro-110 by the prolyl endopeptidase FAP (seprase) activity (in vitro). Degraded by IDE. During IDE degradation, the resulting products initially increase the activation of NPR1 and can also stimulate NPR2 to produce cGMP before the fragments are completely degraded and inactivated by IDE (in vitro). As to expression, brain and also in atria, but at much lower levels than ANP.

It localises to the secreted. Cardiac hormone that plays a key role in mediating cardio-renal homeostasis. May also function as a paracrine antifibrotic factor in the heart. Acts by specifically binding and stimulating NPR1 to produce cGMP, which in turn activates effector proteins that drive various biological responses. Involved in regulating the extracellular fluid volume and maintaining the fluid-electrolyte balance through natriuresis, diuresis, vasorelaxation, and inhibition of renin and aldosterone secretion. Binds the clearance receptor NPR3. Functionally, may affect cardio-renal homeostasis. Able to promote the production of cGMP although its potency is very low compared to brain natriuretic peptide 32. In Canis lupus familiaris (Dog), this protein is Natriuretic peptides B (NPPB).